The following is a 382-amino-acid chain: Dual-specificity RNA methyltransferase RlmN (382 aa).

E96 serves as the catalytic Proton acceptor. One can recognise a Radical SAM core domain in the interval Q102–D342. The cysteines at positions 109 and 345 are disulfide-linked. [4Fe-4S] cluster-binding residues include C116, C120, and C123. S-adenosyl-L-methionine-binding positions include G170–E171, S202, S224–H226, and N302. Catalysis depends on C345, which acts as the S-methylcysteine intermediate.

This sequence belongs to the radical SAM superfamily. RlmN family. Requires [4Fe-4S] cluster as cofactor.

It is found in the cytoplasm. It catalyses the reaction adenosine(2503) in 23S rRNA + 2 reduced [2Fe-2S]-[ferredoxin] + 2 S-adenosyl-L-methionine = 2-methyladenosine(2503) in 23S rRNA + 5'-deoxyadenosine + L-methionine + 2 oxidized [2Fe-2S]-[ferredoxin] + S-adenosyl-L-homocysteine. The catalysed reaction is adenosine(37) in tRNA + 2 reduced [2Fe-2S]-[ferredoxin] + 2 S-adenosyl-L-methionine = 2-methyladenosine(37) in tRNA + 5'-deoxyadenosine + L-methionine + 2 oxidized [2Fe-2S]-[ferredoxin] + S-adenosyl-L-homocysteine. Its function is as follows. Specifically methylates position 2 of adenine 2503 in 23S rRNA and position 2 of adenine 37 in tRNAs. m2A2503 modification seems to play a crucial role in the proofreading step occurring at the peptidyl transferase center and thus would serve to optimize ribosomal fidelity. This Pseudomonas fluorescens (strain Pf0-1) protein is Dual-specificity RNA methyltransferase RlmN.